Reading from the N-terminus, the 83-residue chain is Kappa-ctenitoxin-Pn1a (83 aa).

Positions 1-21 are cleaved as a signal peptide; that stretch reads MWFKIQVLVLAITLITLGIQA. Residues 22–37 constitute a propeptide that is removed on maturation; the sequence is EPNSSPNNPLIVEEDR. Intrachain disulfides connect cysteine 40/cysteine 55, cysteine 47/cysteine 60, cysteine 54/cysteine 71, and cysteine 62/cysteine 69. Positions 78–83 are excised as a propeptide; it reads LFGFGK.

This sequence belongs to the neurotoxin 02 (plectoxin) family. As to expression, expressed by the venom gland.

It is found in the secreted. Its function is as follows. Antagonist of L-type calcium channels (Cav1/CACNA1). In GH3 neuroendocrinal cell line, it reversibly inhibits the A-type potassium current but does not block other potassium currents or calcium channels. Shows an important acetylcholine-mediated antiarrhythmogenic effect in isolated hearts. In vivo, causes paralysis in the posterior limbs and gradual decreases in movement and aggression during 24 hours at dose levels of 5 ug per mouse. In Phoneutria nigriventer (Brazilian armed spider), this protein is Kappa-ctenitoxin-Pn1a.